Here is a 42-residue protein sequence, read N- to C-terminus: Potassium channel toxin gamma-KTx 3.4 (42 aa).

4 disulfide bridges follow: Cys-5-Cys-23, Cys-11-Cys-34, Cys-20-Cys-39, and Cys-24-Cys-41.

The protein belongs to the ergtoxin family. Gamma-KTx 3 subfamily. As to expression, expressed by the venom gland.

It is found in the secreted. Functionally, blocks Kv11/ERG potassium channels. The sequence is that of Potassium channel toxin gamma-KTx 3.4 from Centruroides gracilis (Slenderbrown scorpion).